Here is a 410-residue protein sequence, read N- to C-terminus: Elongation factor Tu, chloroplastic (410 aa).

Positions K10–E214 constitute a tr-type G domain. The segment at G19–T26 is G1. G19–T26 contacts GTP. T26 provides a ligand contact to Mg(2+). The segment at G60–N64 is G2. The G3 stretch occupies residues D81 to G84. GTP is bound by residues D81–H85 and N136–D139. The tract at residues N136–D139 is G4. Residues S174–L176 form a G5 region.

This sequence belongs to the TRAFAC class translation factor GTPase superfamily. Classic translation factor GTPase family. EF-Tu/EF-1A subfamily.

Its subcellular location is the plastid. The protein resides in the chloroplast. It carries out the reaction GTP + H2O = GDP + phosphate + H(+). In terms of biological role, GTP hydrolase that promotes the GTP-dependent binding of aminoacyl-tRNA to the A-site of ribosomes during protein biosynthesis. The chain is Elongation factor Tu, chloroplastic (tufA) from Chlorokybus atmophyticus (Soil alga).